The chain runs to 687 residues: Glycine--tRNA ligase beta subunit (687 aa).

The protein belongs to the class-II aminoacyl-tRNA synthetase family. Tetramer of two alpha and two beta subunits.

It is found in the cytoplasm. It catalyses the reaction tRNA(Gly) + glycine + ATP = glycyl-tRNA(Gly) + AMP + diphosphate. The chain is Glycine--tRNA ligase beta subunit from Citrifermentans bemidjiense (strain ATCC BAA-1014 / DSM 16622 / JCM 12645 / Bem) (Geobacter bemidjiensis).